Reading from the N-terminus, the 628-residue chain is MPSDLAKKKAAKKKEAAKARQRPRKGHEENGDAVTEPQVAEEKIEEANGRETTGDGEVDLLTKELEDFEMKKAAARAVTGVLASHPNSTDVHIINLSLTFHGQELLSDTKLELNSGRRYGLIGLNGIGKSMLLSAIGKREVPIPEHIDIYHLTREMPPSEKTPLQCVMEVDTERAMLEREAERLAHEDAECEKLMELYERLEELDADKAEMRASRILHGLGFTPAMQRKKLKDFSGGWRMRVALARALFIRPFMLLLDEPTNHLDLDACVWLEEELKTFKRILVLVSHSQDFLNGVCTNIIHMHNKKLKYYTGNYDQYVKTRLELEENQMKRFHWEQDQIAHMKNYIARFGHGSAKLARQAQSKEKTLQKMMASGLTERVVSDKTLSFYFPPCGKIPPPVIMVQNVSFKYTKDGPCIYNNLEFGIDLDTRVALVGPNGAGKSTLLKLLTGELLPTDGMIRKHSHVKIGRYHQHLQEQLDLDLSPLEYMMKCYPEIKEKEEMRKIIGRYGLTGKQQVSPIRNLSDGQKCRVCLAWLAWQNPHMLFLDEPTNHLDIETIDALADAINEFEGGMMLVSHDFRLIQQVAQEIWVCEKQTITKWPGDILAYKEHLKSKLVDEEPQLTKRTHNV.

A disordered region spans residues 1–57; sequence MPSDLAKKKAAKKKEAAKARQRPRKGHEENGDAVTEPQVAEEKIEEANGRETTGDGE. A compositionally biased stretch (basic and acidic residues) spans 40–53; sequence AEEKIEEANGRETT. ABC transporter domains follow at residues 91–330 and 401–618; these read VHII…ENQM and IMVQ…VDEE. Residue 123 to 130 participates in ATP binding; it reads GLNGIGKS. A Phosphothreonine modification is found at T223. K309 bears the N6-acetyllysine mark. Residue 435–442 participates in ATP binding; it reads GPNGAGKS. S517 bears the Phosphoserine mark.

The protein belongs to the ABC transporter superfamily. ABCF family. EF3 subfamily.

This chain is ATP-binding cassette sub-family F member 2, found in Mus musculus (Mouse).